An 817-amino-acid chain; its full sequence is Protein hunchback (817 aa).

Disordered stretches follow at residues 51 to 77 (PGTINPHHQHPQQHSSMMASQPQHSPL), 93 to 132 (HNGGGAHHLQFSDNSGAMTPSPNTNVGGQDFGFESNTSSA), and 187 to 252 (YSQQ…EDQD). The segment covering 62-76 (QQHSSMMASQPQHSP) has biased composition (low complexity). The span at 103-119 (FSDNSGAMTPSPNTNVG) shows a compositional bias: polar residues. Residues 189–201 (QQQQQQQQRQLQQ) show a composition bias toward low complexity. 4 consecutive C2H2-type zinc fingers follow at residues 287–309 (HKCKSCGMVAITKMAFWEHARTH), 316–338 (LQCPKCPFVTELKHHLEYHIRKH), 344–366 (FQCDKCSYSCVNKSMLNSHRKSH), and 372–396 (YRCADCDYATKYCHSFKLHLRKYEH). Disordered regions lie at residues 456 to 477 (PLQQQQQPQQPASPAKSSSSVA), 491 to 513 (QNLAQQQQQQQQSPGAQSHSSQQ), 564 to 619 (QLQQ…QQTP), and 666 to 758 (APTS…AGNS). Over residues 564 to 576 (QLQQQQQNKQANE) the composition is skewed to low complexity. The span at 577 to 595 (NGEEDEEDNDEVDEDEEEF) shows a compositional bias: acidic residues. Residues 680 to 694 (MPPTTSSPIHPSQVN) show a composition bias toward polar residues. Over residues 721–758 (PTTANTSASSTASSSGNSSNSSSTSTSSNSNSSSAGNS) the composition is skewed to low complexity. 2 consecutive C2H2-type zinc fingers follow at residues 764–786 (YECKYCDIFFKDAVLYTIHMGYH) and 792–816 (FKCNMCGEKCDGPVGLFVHMARNAH).

This sequence belongs to the hunchback C2H2-type zinc-finger protein family.

The protein resides in the nucleus. Gap class segmentation protein that controls development of head structures. In Musca domestica (House fly), this protein is Protein hunchback (hb).